A 248-amino-acid polypeptide reads, in one-letter code: Triosephosphate isomerase (248 aa).

9–11 lines the substrate pocket; the sequence is NWK. Histidine 94 serves as the catalytic Electrophile. Catalysis depends on glutamate 166, which acts as the Proton acceptor. Substrate contacts are provided by residues glycine 172, serine 212, and 233 to 234; that span reads GG.

The protein belongs to the triosephosphate isomerase family. In terms of assembly, homodimer.

The protein resides in the cytoplasm. It catalyses the reaction D-glyceraldehyde 3-phosphate = dihydroxyacetone phosphate. It participates in carbohydrate biosynthesis; gluconeogenesis. The protein operates within carbohydrate degradation; glycolysis; D-glyceraldehyde 3-phosphate from glycerone phosphate: step 1/1. Functionally, involved in the gluconeogenesis. Catalyzes stereospecifically the conversion of dihydroxyacetone phosphate (DHAP) to D-glyceraldehyde-3-phosphate (G3P). In Clostridium botulinum (strain Okra / Type B1), this protein is Triosephosphate isomerase.